The primary structure comprises 141 residues: Large ribosomal subunit protein uL11 (141 aa).

Belongs to the universal ribosomal protein uL11 family. Part of the ribosomal stalk of the 50S ribosomal subunit. Interacts with L10 and the large rRNA to form the base of the stalk. L10 forms an elongated spine to which L12 dimers bind in a sequential fashion forming a multimeric L10(L12)X complex. One or more lysine residues are methylated.

Functionally, forms part of the ribosomal stalk which helps the ribosome interact with GTP-bound translation factors. This chain is Large ribosomal subunit protein uL11, found in Streptococcus gordonii (strain Challis / ATCC 35105 / BCRC 15272 / CH1 / DL1 / V288).